The following is a 108-amino-acid chain: Biogenesis of lysosome-related organelles complex 1 subunit CNL1 (108 aa).

Belongs to the BLOC1S4 family. As to quaternary structure, component of the biogenesis of lysosome-related organelles complex-1 (BLOC-1).

The protein localises to the cytoplasm. Component of the biogenesis of lysosome-related organelles complex-1 (BLOC-1), a complex that is involved in endosomal cargo sorting. The protein is Biogenesis of lysosome-related organelles complex 1 subunit CNL1 (CLN1) of Zygosaccharomyces rouxii (strain ATCC 2623 / CBS 732 / NBRC 1130 / NCYC 568 / NRRL Y-229).